A 487-amino-acid polypeptide reads, in one-letter code: MKAQPKASHFIGGAFVEDKAGKPLPVIYPATGEEIASLYSATPGIIEAAYAAALKAQGEWAALKPVERGRILRRTAEILREKNRKLSKLETLDTGKALQETLVADAASAADALEFFGGIISGFNGEFVELGGSFAYTRREALGICVGIGAWNYPIQIAAWKSAPALAMGNAFIFKPSENTPLSALALAEAYKEAGLPDGLFNVVQGYGDVGAALVNHRLTAKVSLTGSVPTGRRIMAQAGEQLKHVTMELGGKSPLIVFDDADLESAIGGAMLGNFYSTGQVCSNGTRVFVHKNIRERFIERLVERTRKIRIGDPFDEATQMGPLISAAQRDKVLSYIKKGKAEGATLACGGGVPKLQGFDKGFFIEPTVFADVTDTMTIAREEIFGPVMSVLEFSDEDEVIARANDSEFGLAAGVFTADLSRGHHVIGQIKAGTCWINAYNLTSVEVPFGGYKQSGIGRENGIAALAHYSQIKTVYVEMGKVDSPY.

Positions 27 and 93 each coordinate K(+). Residue 149–151 (GAW) participates in NAD(+) binding. Lysine 161 functions as the Charge relay system in the catalytic mechanism. NAD(+) contacts are provided by residues 175–178 (KPSE) and 228–231 (SVPT). Leucine 243 contacts K(+). Glutamate 249 acts as the Proton acceptor in catalysis. NAD(+) is bound by residues glycine 251, cysteine 283, and glutamate 384. The active-site Nucleophile is cysteine 283. Cysteine 283 is modified (cysteine sulfenic acid (-SOH)). K(+) contacts are provided by lysine 454 and glycine 457. Glutamate 461 serves as the catalytic Charge relay system.

This sequence belongs to the aldehyde dehydrogenase family. In terms of assembly, dimer of dimers. Requires K(+) as cofactor.

It catalyses the reaction betaine aldehyde + NAD(+) + H2O = glycine betaine + NADH + 2 H(+). Its pathway is amine and polyamine biosynthesis; betaine biosynthesis via choline pathway; betaine from betaine aldehyde: step 1/1. In terms of biological role, involved in the biosynthesis of the osmoprotectant glycine betaine. Catalyzes the irreversible oxidation of betaine aldehyde to the corresponding acid. This is Betaine aldehyde dehydrogenase from Brucella melitensis biotype 2 (strain ATCC 23457).